Consider the following 321-residue polypeptide: Arabinan endo-1,5-alpha-L-arabinosidase A (321 aa).

An N-terminal signal peptide occupies residues 1-19 (MYSLLTALSVPLLAGLAHG). D34 functions as the Proton acceptor in the catalytic mechanism. N192 is a glycosylation site (N-linked (GlcNAc...) asparagine). The active-site Proton donor is the E200.

The protein belongs to the glycosyl hydrolase 43 family.

The protein localises to the secreted. It carries out the reaction Endohydrolysis of (1-&gt;5)-alpha-arabinofuranosidic linkages in (1-&gt;5)-arabinans.. The protein operates within glycan metabolism; L-arabinan degradation. Functionally, endo-1,5-alpha-L-arabinanase involved in degradation of pectin. Its preferred substrate is linear 1,5-alpha-L-arabinan. The protein is Arabinan endo-1,5-alpha-L-arabinosidase A (abnA) of Aspergillus aculeatus.